Consider the following 358-residue polypeptide: Probable aminomethyltransferase (358 aa).

It belongs to the GcvT family. The glycine cleavage system is composed of four proteins: P, T, L and H.

It catalyses the reaction N(6)-[(R)-S(8)-aminomethyldihydrolipoyl]-L-lysyl-[protein] + (6S)-5,6,7,8-tetrahydrofolate = N(6)-[(R)-dihydrolipoyl]-L-lysyl-[protein] + (6R)-5,10-methylene-5,6,7,8-tetrahydrofolate + NH4(+). Functionally, the glycine cleavage system catalyzes the degradation of glycine. The polypeptide is Probable aminomethyltransferase (Natronomonas pharaonis (strain ATCC 35678 / DSM 2160 / CIP 103997 / JCM 8858 / NBRC 14720 / NCIMB 2260 / Gabara) (Halobacterium pharaonis)).